Reading from the N-terminus, the 661-residue chain is UvrABC system protein B (661 aa).

The 158-residue stretch at 25–182 folds into the Helicase ATP-binding domain; sequence AGLSSKKRSQ…NDLINLQYER (158 aa). ATP is bound at residue 38–45; sequence GITGSGKT. A Beta-hairpin motif is present at residues 91–114; that stretch reads YYDYYQPEAYIARTDTFIEKDSSI. One can recognise a Helicase C-terminal domain in the interval 430–592; that stretch reads QIEDLISEIQ…IIPKTINRTI (163 aa). Residues 621–656 form the UVR domain; it reads KTHIDKLKKEMLKAASNLEFEQAAKLRDQLKTLEEA.

The protein belongs to the UvrB family. As to quaternary structure, forms a heterotetramer with UvrA during the search for lesions. Interacts with UvrC in an incision complex.

Its subcellular location is the cytoplasm. Its function is as follows. The UvrABC repair system catalyzes the recognition and processing of DNA lesions. A damage recognition complex composed of 2 UvrA and 2 UvrB subunits scans DNA for abnormalities. Upon binding of the UvrA(2)B(2) complex to a putative damaged site, the DNA wraps around one UvrB monomer. DNA wrap is dependent on ATP binding by UvrB and probably causes local melting of the DNA helix, facilitating insertion of UvrB beta-hairpin between the DNA strands. Then UvrB probes one DNA strand for the presence of a lesion. If a lesion is found the UvrA subunits dissociate and the UvrB-DNA preincision complex is formed. This complex is subsequently bound by UvrC and the second UvrB is released. If no lesion is found, the DNA wraps around the other UvrB subunit that will check the other stand for damage. This chain is UvrABC system protein B, found in Rickettsia massiliae (strain Mtu5).